The sequence spans 41 residues: MKVLSSLKSAKSRHPDCQIVRRRGKLFVICKSNPRFKARQR.

The protein belongs to the bacterial ribosomal protein bL36 family.

The protein is Large ribosomal subunit protein bL36A of Aeromonas salmonicida (strain A449).